The primary structure comprises 499 residues: Circadian clock oscillator protein KaiC (499 aa).

KaiC domains follow at residues 1-243 and 257-499; these read MQSS…VSVF and VRIS…DERA. Positions 45, 46, 47, 48, 49, 85, 220, 221, 222, 224, 226, 286, 287, 288, 289, 290, 291, and 292 each coordinate ATP. Threonine 49 contributes to the Mg(2+) binding site. Position 291 (threonine 291) interacts with Mg(2+). Glutamate 314 contributes to the Mg(2+) binding site. Residue tryptophan 327 participates in ATP binding. At serine 427 the chain carries Phosphoserine; by autocatalysis. Residue threonine 428 is modified to Phosphothreonine; by autocatalysis. 7 residues coordinate ATP: arginine 447, lysine 453, methionine 454, arginine 455, serine 457, histidine 459, and lysine 461.

It belongs to the KaiC family. As to quaternary structure, homohexamer; hexamerization is dependent on ATP-binding. Component of the KaiBC complex. KaiC interacts with SasA, activating its autokinase function and leading to RpaA activation. It depends on Mg(2+) as a cofactor. Post-translationally, phosphorylated on serine and threonine residues by autocatalysis. Has a 4 step phosphorylation cycle; the autokinase acts first on Thr-428, then Ser-427. When Ser-427 is modified KaiC switches to an autophosphatase mode, acting first on phospho-Thr-428 then phospho-Ser-427.

It catalyses the reaction L-seryl-[protein] + ATP = O-phospho-L-seryl-[protein] + ADP + H(+). It carries out the reaction L-threonyl-[protein] + ATP = O-phospho-L-threonyl-[protein] + ADP + H(+). The catalysed reaction is ATP + H2O = ADP + phosphate + H(+). Functionally, central component of the KaiBC oscillator complex, which constitutes the main circadian regulator in cyanobacteria. Its composition changes during the circadian cycle to control KaiC phosphorylation. Autophosphorylates and has a weak ATPase activity; ATPase activity defines the circadian period. This Prochlorococcus marinus (strain MIT 9313) protein is Circadian clock oscillator protein KaiC.